The following is a 246-amino-acid chain: Ribonuclease 3 (246 aa).

The RNase III domain maps to 18–147 (FQELQKKIGI…FIGALYLDQG (130 aa)). E60 is a Mg(2+) binding site. Residue D64 is part of the active site. 2 residues coordinate Mg(2+): D133 and E136. E136 is a catalytic residue. The DRBM domain maps to 173-242 (DFKSQLQELV…AQMALETLRA (70 aa)).

The protein belongs to the ribonuclease III family. As to quaternary structure, homodimer. It depends on Mg(2+) as a cofactor.

It localises to the cytoplasm. It carries out the reaction Endonucleolytic cleavage to 5'-phosphomonoester.. Its function is as follows. Digests double-stranded RNA. Involved in the processing of primary rRNA transcript to yield the immediate precursors to the large and small rRNAs (23S and 16S). Processes some mRNAs, and tRNAs when they are encoded in the rRNA operon. Processes pre-crRNA and tracrRNA of type II CRISPR loci if present in the organism. The chain is Ribonuclease 3 from Geobacillus thermodenitrificans (strain NG80-2).